Consider the following 100-residue polypeptide: Urease subunit gamma (100 aa).

Belongs to the urease gamma subunit family. As to quaternary structure, heterotrimer of UreA (gamma), UreB (beta) and UreC (alpha) subunits. Three heterotrimers associate to form the active enzyme.

It is found in the cytoplasm. The enzyme catalyses urea + 2 H2O + H(+) = hydrogencarbonate + 2 NH4(+). The protein operates within nitrogen metabolism; urea degradation; CO(2) and NH(3) from urea (urease route): step 1/1. This chain is Urease subunit gamma, found in Pseudomonas syringae pv. syringae (strain B728a).